Here is a 72-residue protein sequence, read N- to C-terminus: Translation initiation factor IF-1 2 (72 aa).

Positions 1–72 constitute an S1-like domain; it reads MAKEDAIEVD…KRGRITYRMK (72 aa).

It belongs to the IF-1 family. As to quaternary structure, component of the 30S ribosomal translation pre-initiation complex which assembles on the 30S ribosome in the order IF-2 and IF-3, IF-1 and N-formylmethionyl-tRNA(fMet); mRNA recruitment can occur at any time during PIC assembly.

Its subcellular location is the cytoplasm. Its function is as follows. One of the essential components for the initiation of protein synthesis. Stabilizes the binding of IF-2 and IF-3 on the 30S subunit to which N-formylmethionyl-tRNA(fMet) subsequently binds. Helps modulate mRNA selection, yielding the 30S pre-initiation complex (PIC). Upon addition of the 50S ribosomal subunit IF-1, IF-2 and IF-3 are released leaving the mature 70S translation initiation complex. The protein is Translation initiation factor IF-1 2 of Nitratidesulfovibrio vulgaris (strain DP4) (Desulfovibrio vulgaris).